The sequence spans 1014 residues: EMILIN-1-A (1014 aa).

The signal sequence occupies residues 1-27; it reads MALYFVYLSTLLALILLGDNWAAGTYA. The region spanning 53 to 128 is the EMI domain; sequence HRNWCAYVVT…HGYSGDDCSD (76 aa). Intrachain disulfides connect Cys57/Cys118, Cys84/Cys89, and Cys117/Cys126. Disordered regions lie at residues 125–150 and 811–869; these read DCSD…SDSD and QDFT…ANVP. Residues 134-150 are compositionally biased toward basic and acidic residues; it reads HDSRARPTGEEGRSDSD. The stretch at 145-179 forms a coiled coil; the sequence is GRSDSDRIRQLEEQIQSLNKNLHNLQKKIYEESQR. Residues 815–865 form the Collagen-like domain; sequence GPPGLPGPQGEKGSKGPPGPRGPLGKEGPQGRVGPVGPPGLRGEQGPPGKD. Positions 840–856 are enriched in low complexity; it reads KEGPQGRVGPVGPPGLR. The C1q domain occupies 866–1012; the sequence is ANVPRLSFSA…GMLLYEESED (147 aa).

It localises to the secreted. Its subcellular location is the extracellular space. The protein localises to the extracellular matrix. Functionally, may be responsible for anchoring smooth muscle cells to elastic fibers, and may be involved not only in the formation of the elastic fiber, but also in the processes that regulate vessel assembly. Has cell adhesive capacity. The polypeptide is EMILIN-1-A (Danio rerio (Zebrafish)).